Consider the following 146-residue polypeptide: MLILDRILGQASDPALADRLHDLSHAGQVETLSLSGSDIQRHRLRLASDRGTDCAIRLERHQQLRNGSVLMLDSQRAIVVQMQDQHYLDLLPRDSAAALELGYFAGNMHWAVRFAGDTLQIPLNGPEADYLERLAPMLADGRVRRA.

It belongs to the UreE family.

The protein resides in the cytoplasm. Involved in urease metallocenter assembly. Binds nickel. Probably functions as a nickel donor during metallocenter assembly. The protein is Urease accessory protein UreE 1 of Pseudomonas syringae pv. tomato (strain ATCC BAA-871 / DC3000).